The sequence spans 197 residues: 7-methyl-GTP pyrophosphatase (197 aa).

Catalysis depends on Asp-72, which acts as the Proton acceptor.

The protein belongs to the Maf family. YceF subfamily. A divalent metal cation is required as a cofactor.

It is found in the cytoplasm. It carries out the reaction N(7)-methyl-GTP + H2O = N(7)-methyl-GMP + diphosphate + H(+). Functionally, nucleoside triphosphate pyrophosphatase that hydrolyzes 7-methyl-GTP (m(7)GTP). May have a dual role in cell division arrest and in preventing the incorporation of modified nucleotides into cellular nucleic acids. The sequence is that of 7-methyl-GTP pyrophosphatase from Bordetella avium (strain 197N).